We begin with the raw amino-acid sequence, 486 residues long: Membrane-bound lytic murein transglycosylase F (486 aa).

A signal peptide spans 1–28; that stretch reads MFAHTLFRKRCAIWLLAIGIFLMLGSCA. The tract at residues 29 to 267 is non-LT domain; the sequence is EKPSELERIK…RLRERYYGHV (239 aa). Residues 268–486 form an LT domain region; it reads DVLGYVGAYA…TDLMEELPPL (219 aa). The active site involves glutamate 314.

The protein in the N-terminal section; belongs to the bacterial solute-binding protein 3 family. This sequence in the C-terminal section; belongs to the transglycosylase Slt family.

The protein resides in the cell outer membrane. The enzyme catalyses Exolytic cleavage of the (1-&gt;4)-beta-glycosidic linkage between N-acetylmuramic acid (MurNAc) and N-acetylglucosamine (GlcNAc) residues in peptidoglycan, from either the reducing or the non-reducing ends of the peptidoglycan chains, with concomitant formation of a 1,6-anhydrobond in the MurNAc residue.. Its function is as follows. Murein-degrading enzyme that degrades murein glycan strands and insoluble, high-molecular weight murein sacculi, with the concomitant formation of a 1,6-anhydromuramoyl product. Lytic transglycosylases (LTs) play an integral role in the metabolism of the peptidoglycan (PG) sacculus. Their lytic action creates space within the PG sacculus to allow for its expansion as well as for the insertion of various structures such as secretion systems and flagella. This is Membrane-bound lytic murein transglycosylase F from Stutzerimonas stutzeri (strain A1501) (Pseudomonas stutzeri).